A 397-amino-acid chain; its full sequence is Cysteine protease ATG4A (397 aa).

The Nucleophile role is filled by cysteine 79. Residues aspartate 279 and histidine 281 contribute to the active site. An LIR motif is present at residues phenylalanine 392 to leucine 395.

Belongs to the peptidase C54 family.

It is found in the cytoplasm. The catalysed reaction is [protein]-C-terminal L-amino acid-glycyl-phosphatidylethanolamide + H2O = [protein]-C-terminal L-amino acid-glycine + a 1,2-diacyl-sn-glycero-3-phosphoethanolamine. Its function is as follows. Cysteine protease that plays a key role in autophagy by mediating both proteolytic activation and delipidation of ATG8 family proteins. The protease activity is required for proteolytic activation of ATG8 family proteins: cleaves the C-terminal amino acid of ATG8 proteins to reveal a C-terminal glycine. Exposure of the glycine at the C-terminus is essential for ATG8 proteins conjugation to phosphatidylethanolamine (PE) and insertion to membranes, which is necessary for autophagy. Protease activity is also required to counteract formation of high-molecular weight conjugates of ATG8 proteins (ATG8ylation): acts as a deubiquitinating-like enzyme that removes ATG8 conjugated to other proteins, such as ATG3. In addition to the protease activity, also mediates delipidation of ATG8 family proteins. Catalyzes delipidation of PE-conjugated forms of ATG8 proteins during macroautophagy. This is Cysteine protease ATG4A from Xenopus laevis (African clawed frog).